The chain runs to 287 residues: Large ribosomal subunit protein uL2 (287 aa).

Positions Arg221 to Ser287 are disordered. Over residues Lys258–Ser287 the composition is skewed to basic residues.

This sequence belongs to the universal ribosomal protein uL2 family. In terms of assembly, part of the 50S ribosomal subunit. Forms a bridge to the 30S subunit in the 70S ribosome.

One of the primary rRNA binding proteins. Required for association of the 30S and 50S subunits to form the 70S ribosome, for tRNA binding and peptide bond formation. It has been suggested to have peptidyltransferase activity; this is somewhat controversial. Makes several contacts with the 16S rRNA in the 70S ribosome. The protein is Large ribosomal subunit protein uL2 of Prochlorococcus marinus subsp. pastoris (strain CCMP1986 / NIES-2087 / MED4).